A 229-amino-acid polypeptide reads, in one-letter code: MWLAVNIGNSRQHWGWFTGTKLVRTLDFPLTHWDAQAPDAAEQIVVASVTTTHLERWRTLPHARILNLADVPLSGTYPTLGIDRALNLIAAADAYGCPALVTDFGTAITLSAVDEFGRFCGGAILPGLGTQLRALEHFTAALPAVDLPEPWPPLLARTTQAAIQSGVVRVTLAGLAQFLESWKRQYPGGISVATGGDSERVHRWLPDLFDVQDTHLTLWGICVAARGAD.

6–13 (NIGNSRQH) contacts ATP. Residues Tyr-77 and 81-84 (GIDR) contribute to the substrate site. Asp-83 serves as the catalytic Proton acceptor. Asp-103 lines the K(+) pocket. Thr-106 contributes to the ATP binding site. Thr-159 is a binding site for substrate.

It belongs to the type III pantothenate kinase family. As to quaternary structure, homodimer. NH4(+) is required as a cofactor. The cofactor is K(+).

The protein resides in the cytoplasm. It carries out the reaction (R)-pantothenate + ATP = (R)-4'-phosphopantothenate + ADP + H(+). Its pathway is cofactor biosynthesis; coenzyme A biosynthesis; CoA from (R)-pantothenate: step 1/5. In terms of biological role, catalyzes the phosphorylation of pantothenate (Pan), the first step in CoA biosynthesis. In Gloeobacter violaceus (strain ATCC 29082 / PCC 7421), this protein is Type III pantothenate kinase.